The primary structure comprises 421 residues: Histidine--tRNA ligase (421 aa).

It belongs to the class-II aminoacyl-tRNA synthetase family. As to quaternary structure, homodimer.

It localises to the cytoplasm. It carries out the reaction tRNA(His) + L-histidine + ATP = L-histidyl-tRNA(His) + AMP + diphosphate + H(+). The sequence is that of Histidine--tRNA ligase from Coxiella burnetii (strain CbuG_Q212) (Coxiella burnetii (strain Q212)).